The chain runs to 881 residues: Putative SWI/SNF-related matrix-associated actin-dependent regulator of chromatin subfamily A member 3-like 1 (881 aa).

One can recognise a Helicase ATP-binding domain in the interval 272–486; the sequence is DKRPDPLRGG…YSLMAFLRFE (215 aa). 285 to 292 serves as a coordination point for ATP; that stretch reads DDMGLGKT. Positions 308 to 343 are disordered; the sequence is STSTPTEEPLDGEGDKIEKKGKKRGRGKSSESVTRK. The DEAH box signature appears at 437–440; the sequence is DEAH. The RING-type zinc-finger motif lies at 635–674; it reads CPICISPPTNIIITRCAHIFCRACILQTLQRSKPLCPLCR. The disordered stretch occupies residues 681 to 703; it reads DLYNAPPPPPDSSNTDGEDAKSS. The Helicase C-terminal domain occupies 711 to 876; the sequence is ALLSLLMASR…EREVNVEDVV (166 aa).

This sequence belongs to the SNF2/RAD54 helicase family. RAD16 subfamily.

Its subcellular location is the nucleus. Functionally, possesses intrinsic ATP-dependent nucleosome-remodeling activity. This activity may be required for transcriptional activation or repression of specific target promoters. In Arabidopsis thaliana (Mouse-ear cress), this protein is Putative SWI/SNF-related matrix-associated actin-dependent regulator of chromatin subfamily A member 3-like 1.